A 528-amino-acid polypeptide reads, in one-letter code: U6 snRNA (guanine-N(2))-methyltransferase THUMPD2 (528 aa).

Positions 154 to 168 (QEVAKDHGESQEDKL) are enriched in basic and acidic residues. Disordered stretches follow at residues 154–200 (QEVA…ADAQ) and 437–460 (MKTL…RASS). In terms of domain architecture, THUMP spans 162-266 (ESQEDKLLQG…DAYSVVGIPL (105 aa)).

This sequence belongs to the methyltransferase superfamily. In terms of assembly, part of the heterodimeric THUMPD2-TRM112 methyltransferase complex; this complex forms an active tRNA methyltransferase, where TRMT112 acts as an activator of the catalytic subunit THUMPD2.

It is found in the nucleus. The catalysed reaction is guanosine in U6 snRNA + S-adenosyl-L-methionine = N(2)-methylguanosine in U6 snRNA + S-adenosyl-L-homocysteine + H(+). Its function is as follows. Catalytic subunit of the THUMPD2-TRM112 methyltransferase complex, that specifically mediates the S-adenosyl-L-methionine-dependent N(2)-methylation of guanosine nucleotides, most probably at position 72 (m2G72), in the U6snRNA of the major spliceosome. This modification in the U6 snRNA affects the constitutive splicing efficiency of introns that have suboptimal splice sites and can impact final mRNA levels. The polypeptide is U6 snRNA (guanine-N(2))-methyltransferase THUMPD2 (Mus musculus (Mouse)).